Reading from the N-terminus, the 65-residue chain is Gallinacin-1 (65 aa).

The N-terminal stretch at Met1–Ala19 is a signal peptide. The propeptide occupies Gly20–Leu25. 3 disulfides stabilise this stretch: Cys31-Cys59, Cys38-Cys53, and Cys43-Cys60.

This sequence belongs to the beta-defensin family. Strong expression in the bone marrow, lung, testis. Moderate expression in the bursa and intestine. Low expression in the cloaca, gall bladder, brain and pancreas. Expressed in the vagina, ovarian stroma and the theca and granulosa layers of the ovarian follicle.

It localises to the secreted. The protein resides in the cytoplasmic granule. Its function is as follows. Has bactericidal activity. Potent activity against E.coli ML-35, L.monocytogenes EGD and C.albicans. This is Gallinacin-1 (GAL1) from Gallus gallus (Chicken).